The sequence spans 365 residues: MSKPAVKSVPSATAKTATRAVNIRQKVKAPKQAKPEAKGRAKPSKDKPRAEIKKALHPRNAHLNGYDFPALYAAFTQLKTFVRPTPYGTLSIDFADPLAVKTLNAALLKHHYGIGAWDIPQGALCPPIPGRVDYVHYVADLLAEGDKSCAMDKARVLDIGTGANGIYPILGCQVYGWQYVASDINAHSLTNVQSIIEQNPVLQGRISLRLQPDDKAVFKGVIQAEERFELTLCNPPFHASMAEASEGTKRKVNNLQLNRGSSVKAAPKLNFGGQAAELWCQGGERQFLATMIRESQMFADQCLWFTSLVSKQENLKPCYQALAQLNVDTVKTIEMQQGNKITRVLAWSFQSAAKRKIWRAEHLAN.

The disordered stretch occupies residues 1–50 (MSKPAVKSVPSATAKTATRAVNIRQKVKAPKQAKPEAKGRAKPSKDKPRA). A compositionally biased stretch (basic and acidic residues) spans 33–50 (AKPEAKGRAKPSKDKPRA).

It belongs to the methyltransferase superfamily. METTL16/RlmF family.

It localises to the cytoplasm. The enzyme catalyses adenosine(1618) in 23S rRNA + S-adenosyl-L-methionine = N(6)-methyladenosine(1618) in 23S rRNA + S-adenosyl-L-homocysteine + H(+). In terms of biological role, specifically methylates the adenine in position 1618 of 23S rRNA. In Shewanella baltica (strain OS155 / ATCC BAA-1091), this protein is Ribosomal RNA large subunit methyltransferase F.